The chain runs to 370 residues: Cytochrome b (370 aa).

A run of 4 helical transmembrane segments spans residues 25–45 (FGSMLLACLTLQLLTGFFLAV), 69–90 (WMMQNLHAIGASMFFICIYIHI), 105–125 (WLSGTTLLIMLMATAFFGYVL), and 170–190 (FFALHFILPFGIISLSSLHIL). Histidine 75 and histidine 89 together coordinate heme b. Heme b contacts are provided by histidine 174 and histidine 188. Residue histidine 193 coordinates a ubiquinone. A run of 4 helical transmembrane segments spans residues 218–238 (YKDMLMLTIMTIMLLTIVSFF), 280–300 (LGGALALTMSIMILLTMPFTH), 312–332 (LMQLTFWTFTATFLVISWTAT), and 339–358 (FTTISQVAALMYFLFFISNP).

Belongs to the cytochrome b family. In terms of assembly, the cytochrome bc1 complex contains 3 respiratory subunits (MT-CYB, CYC1 and UQCRFS1), 2 core proteins (UQCRC1 and UQCRC2) and probably 6 low-molecular weight proteins. The cofactor is heme b.

It is found in the mitochondrion inner membrane. Functionally, component of the ubiquinol-cytochrome c reductase complex (complex III or cytochrome b-c1 complex) that is part of the mitochondrial respiratory chain. The b-c1 complex mediates electron transfer from ubiquinol to cytochrome c. Contributes to the generation of a proton gradient across the mitochondrial membrane that is then used for ATP synthesis. In Chilabothrus striatus (Haitian boa constrictor), this protein is Cytochrome b (MT-CYB).